The primary structure comprises 122 residues: Small ribosomal subunit protein uS13 (122 aa).

Basic residues predominate over residues 95 to 116 (GLPVRGQKTKTNARTRKGRRKT). The segment at 95-122 (GLPVRGQKTKTNARTRKGRRKTVGAATK) is disordered.

The protein belongs to the universal ribosomal protein uS13 family. Part of the 30S ribosomal subunit. Forms a loose heterodimer with protein S19. Forms two bridges to the 50S subunit in the 70S ribosome.

Functionally, located at the top of the head of the 30S subunit, it contacts several helices of the 16S rRNA. In the 70S ribosome it contacts the 23S rRNA (bridge B1a) and protein L5 of the 50S subunit (bridge B1b), connecting the 2 subunits; these bridges are implicated in subunit movement. Contacts the tRNAs in the A and P-sites. In Campylobacter concisus (strain 13826), this protein is Small ribosomal subunit protein uS13.